A 539-amino-acid chain; its full sequence is Eukaryotic translation initiation factor 3 subunit L (539 aa).

Residues 306–514 enclose the PCI domain; sequence TFSDILLYIQ…IHIADTKVSH (209 aa).

This sequence belongs to the eIF-3 subunit L family. Component of the eukaryotic translation initiation factor 3 (eIF-3) complex. The eIF-3 complex interacts with pix.

The protein localises to the cytoplasm. In terms of biological role, component of the eukaryotic translation initiation factor 3 (eIF-3) complex, which is involved in protein synthesis of a specialized repertoire of mRNAs and, together with other initiation factors, stimulates binding of mRNA and methionyl-tRNAi to the 40S ribosome. The eIF-3 complex specifically targets and initiates translation of a subset of mRNAs involved in cell proliferation. The polypeptide is Eukaryotic translation initiation factor 3 subunit L (Drosophila sechellia (Fruit fly)).